Here is a 204-residue protein sequence, read N- to C-terminus: Small ribosomal subunit protein uS4 (204 aa).

Residues 92 to 153 (RRLDALVLRS…RSKEKTLFTI (62 aa)) form the S4 RNA-binding domain.

This sequence belongs to the universal ribosomal protein uS4 family. In terms of assembly, part of the 30S ribosomal subunit. Contacts protein S5. The interaction surface between S4 and S5 is involved in control of translational fidelity.

Functionally, one of the primary rRNA binding proteins, it binds directly to 16S rRNA where it nucleates assembly of the body of the 30S subunit. Its function is as follows. With S5 and S12 plays an important role in translational accuracy. The protein is Small ribosomal subunit protein uS4 of Streptomyces coelicolor (strain ATCC BAA-471 / A3(2) / M145).